Consider the following 316-residue polypeptide: Polyprenyl transferase ausN (316 aa).

A run of 9 helical transmembrane segments spans residues Val45–Leu65, Val69–Ile89, Gly108–Ser128, Leu129–Leu149, Leu163–Pro183, Ile188–Tyr208, Asp233–Leu253, Leu256–Leu276, and Ser296–Leu316.

It belongs to the UbiA prenyltransferase family. Requires Mg(2+) as cofactor.

The protein localises to the membrane. The catalysed reaction is 3,5-dimethylorsellinate + (2E,6E)-farnesyl diphosphate = (3R)-3-farnesyl-6-hydroxy-2,3,5-trimethyl-4-oxocyclohexa-1,5-diene-1-carboxylate + diphosphate + H(+). It participates in secondary metabolite biosynthesis; terpenoid biosynthesis. Its function is as follows. Polyprenyl transferase; part of the gene cluster A that mediates the biosynthesis of the fungal meroterpenoid acetoxydehydroaustin. The first step of the pathway is the synthesis of 3,5-dimethylorsellinic acid by the polyketide synthase ausA. 3,5-dimethylorsellinic acid is then prenylated by the polyprenyl transferase ausN. Further epoxidation by the FAD-dependent monooxygenase ausM and cyclization by the probable terpene cyclase ausL lead to the formation of protoaustinoid A. Protoaustinoid A is then oxidized to spiro-lactone preaustinoid A3 by the combined action of the FAD-binding monooxygenases ausB and ausC, and the dioxygenase ausE. Acid-catalyzed keto-rearrangement and ring contraction of the tetraketide portion of preaustinoid A3 by ausJ lead to the formation of preaustinoid A4. The aldo-keto reductase ausK, with the help of ausH, is involved in the next step by transforming preaustinoid A4 into isoaustinone which is in turn hydroxylated by the P450 monooxygenase ausI to form austinolide. The cytochrome P450 monooxygenase ausG then modifies austinolide to austinol. Austinol is further acetylated to austin by the O-acetyltransferase ausP, which spontaneously changes to dehydroaustin. The cytochrome P450 monooxygenase then converts dehydroaustin is into 7-dehydrodehydroaustin. The hydroxylation catalyzed by ausR permits the second O-acetyltransferase ausQ to add an additional acetyl group to the molecule, leading to the formation of acetoxydehydroaustin. Due to genetic rearrangements of the clusters and the subsequent loss of some enzymes, the end product of the Penicillium brasilianum austinoid biosynthesis clusters is acetoxydehydroaustin. The sequence is that of Polyprenyl transferase ausN from Penicillium brasilianum.